The sequence spans 743 residues: Polyribonucleotide nucleotidyltransferase (743 aa).

Mg(2+) is bound by residues Asp-494 and Asp-500. The region spanning 561–620 is the KH domain; it reads PQHAEVFVNPDIIRLIIGPGGKNIKAITAATGASVDIEDSGRVSIFAPTAEALEKAREMV. The 75-residue stretch at 630-704 folds into the S1 motif domain; sequence GKNYNAKVRK…SRKAVLLEEQ (75 aa). Positions 702–743 are disordered; sequence EEQGHPWNPEDTARPQRSDRGDRGDRRGDRGGRDRRDRGDRR. The span at 712–743 shows a compositional bias: basic and acidic residues; sequence DTARPQRSDRGDRGDRRGDRGGRDRRDRGDRR.

This sequence belongs to the polyribonucleotide nucleotidyltransferase family. Requires Mg(2+) as cofactor.

The protein resides in the cytoplasm. It catalyses the reaction RNA(n+1) + phosphate = RNA(n) + a ribonucleoside 5'-diphosphate. Its function is as follows. Involved in mRNA degradation. Catalyzes the phosphorolysis of single-stranded polyribonucleotides processively in the 3'- to 5'-direction. The protein is Polyribonucleotide nucleotidyltransferase of Desulfovibrio desulfuricans (strain ATCC 27774 / DSM 6949 / MB).